The following is a 104-amino-acid chain: Large ribosomal subunit protein uL24 (104 aa).

This sequence belongs to the universal ribosomal protein uL24 family. As to quaternary structure, part of the 50S ribosomal subunit.

In terms of biological role, one of two assembly initiator proteins, it binds directly to the 5'-end of the 23S rRNA, where it nucleates assembly of the 50S subunit. Functionally, one of the proteins that surrounds the polypeptide exit tunnel on the outside of the subunit. The chain is Large ribosomal subunit protein uL24 from Clostridium botulinum (strain Eklund 17B / Type B).